Reading from the N-terminus, the 1040-residue chain is Tudor domain-containing protein 5 (1040 aa).

3 consecutive HTH OST-type domains span residues 7–80 (IQDC…KAIP), 122–197 (VPPI…LKKS), and 291–365 (VDPE…FDAD). In terms of domain architecture, Tudor spans 533-592 (FIQPGHLCCVKISEDKWWYRVIIHRILGKKEVEVFYPDFGNIGTVQKSSLRFLKCCYTKL). A Phosphoserine modification is found at serine 809. Disordered stretches follow at residues 857-891 (DVKG…YPLD) and 912-975 (AERS…AKDK). Composition is skewed to polar residues over residues 872-891 (EKNT…YPLD) and 912-924 (AERS…SIQT). The residue at position 943 (serine 943) is a Phosphoserine. The segment covering 946 to 956 (NHSGSVESSPG) has biased composition (polar residues). Over residues 958 to 975 (LKKEDVSNSRAEATAKDK) the composition is skewed to basic and acidic residues.

Belongs to the TDRD5 family. In terms of tissue distribution, gonad-specific. Mainly expressed in testis. Present at low level in ovary (at protein level).

It localises to the cytoplasm. Required during spermiogenesis to participate in the repression transposable elements and prevent their mobilization, which is essential for the germline integrity. Probably acts via the piRNA metabolic process, which mediates the repression of transposable elements during meiosis by forming complexes composed of piRNAs and Piwi proteins and govern the methylation and subsequent repression of transposons. Required for chromatoid body (CB) assembly. The sequence is that of Tudor domain-containing protein 5 (Tdrd5) from Mus musculus (Mouse).